A 148-amino-acid polypeptide reads, in one-letter code: 3-hydroxyacyl-[acyl-carrier-protein] dehydratase FabZ (148 aa).

The active site involves histidine 49.

The protein belongs to the thioester dehydratase family. FabZ subfamily.

The protein localises to the cytoplasm. The catalysed reaction is a (3R)-hydroxyacyl-[ACP] = a (2E)-enoyl-[ACP] + H2O. Functionally, involved in unsaturated fatty acids biosynthesis. Catalyzes the dehydration of short chain beta-hydroxyacyl-ACPs and long chain saturated and unsaturated beta-hydroxyacyl-ACPs. In Ehrlichia canis (strain Jake), this protein is 3-hydroxyacyl-[acyl-carrier-protein] dehydratase FabZ.